The chain runs to 518 residues: Two-component response regulator-like PRR1 (518 aa).

One can recognise a Response regulatory domain in the interval 29–147 (RILLCDSDPS…ELLNLWTHVW (119 aa)). Disordered stretches follow at residues 172 to 241 (PSDA…PGVM), 266 to 305 (TPTT…GTDV), and 483 to 518 (VRQA…SSPE). The span at 196–212 (NQETSTSNQHEYESNPS) shows a compositional bias: polar residues. The 43-residue stretch at 443-485 (RAAALAKFRLKRKERCFDKKVRYVNRKKLAETRPRVRGQFVRQ) folds into the CCT domain.

Belongs to the ARR-like family. In terms of assembly, interacts with PIL13. Interacts with PIL15.

Its subcellular location is the nucleus. Its function is as follows. Controls photoperiodic flowering response. Seems to be one of the component of the circadian clock. Expression of several members of the ARR-like family is controlled by circadian rhythm. The particular coordinated sequential expression of PRR73, PRR37, PRR95, PRR59 and PPR1 result to circadian waves that may be at the basis of the endogenous circadian clock. The polypeptide is Two-component response regulator-like PRR1 (PRR1) (Oryza sativa subsp. japonica (Rice)).